Consider the following 218-residue polypeptide: Thiopurine S-methyltransferase (218 aa).

S-adenosyl-L-methionine is bound by residues tryptophan 10, leucine 45, glutamate 66, and arginine 123.

The protein belongs to the class I-like SAM-binding methyltransferase superfamily. TPMT family.

The protein localises to the cytoplasm. It catalyses the reaction S-adenosyl-L-methionine + a thiopurine = S-adenosyl-L-homocysteine + a thiopurine S-methylether.. The sequence is that of Thiopurine S-methyltransferase from Shewanella baltica (strain OS223).